The primary structure comprises 289 residues: ATP synthase subunit a (289 aa).

6 helical membrane-spanning segments follow: residues 43 to 63 (AFHVDTLGWSVALGLIFVLIF), 101 to 121 (SAVIAPLALTIFVWVFLMNAV), 160 to 180 (LSVFALIIFYSIKVKGIGGFI), 193 to 213 (IFVQALLIPVNFLLEFVTLIA), 232 to 252 (VFILIAVMFGSGLLWLSGLGI), and 259 to 279 (AVFHILIITLQAFIFMMLTIV).

Belongs to the ATPase A chain family. As to quaternary structure, F-type ATPases have 2 components, CF(1) - the catalytic core - and CF(0) - the membrane proton channel. CF(1) has five subunits: alpha(3), beta(3), gamma(1), delta(1), epsilon(1). CF(0) has three main subunits: a(1), b(2) and c(9-12). The alpha and beta chains form an alternating ring which encloses part of the gamma chain. CF(1) is attached to CF(0) by a central stalk formed by the gamma and epsilon chains, while a peripheral stalk is formed by the delta and b chains.

The protein resides in the cell inner membrane. Functionally, key component of the proton channel; it plays a direct role in the translocation of protons across the membrane. This Pseudomonas syringae pv. tomato (strain ATCC BAA-871 / DC3000) protein is ATP synthase subunit a.